The following is a 224-amino-acid chain: Orotate phosphoribosyltransferase (224 aa).

5-phospho-alpha-D-ribose 1-diphosphate contacts are provided by residues Lys26, 73 to 74 (YK), Arg100, Lys101, Lys104, His106, and 127 to 135 (EDVTTSGKS). Thr131 and Arg160 together coordinate orotate.

Belongs to the purine/pyrimidine phosphoribosyltransferase family. PyrE subfamily. As to quaternary structure, homodimer. Requires Mg(2+) as cofactor.

The catalysed reaction is orotidine 5'-phosphate + diphosphate = orotate + 5-phospho-alpha-D-ribose 1-diphosphate. It participates in pyrimidine metabolism; UMP biosynthesis via de novo pathway; UMP from orotate: step 1/2. In terms of biological role, catalyzes the transfer of a ribosyl phosphate group from 5-phosphoribose 1-diphosphate to orotate, leading to the formation of orotidine monophosphate (OMP). This is Orotate phosphoribosyltransferase from Clostridium botulinum (strain Alaska E43 / Type E3).